A 478-amino-acid chain; its full sequence is Protein nucleotidyltransferase YdiU (478 aa).

The ATP site is built by glycine 84, glycine 86, arginine 87, lysine 107, aspartate 119, glycine 120, arginine 170, and arginine 177. Aspartate 246 acts as the Proton acceptor in catalysis. Mg(2+) is bound by residues asparagine 247 and aspartate 256. ATP is bound at residue aspartate 256.

The protein belongs to the SELO family. Mg(2+) serves as cofactor. The cofactor is Mn(2+).

It carries out the reaction L-seryl-[protein] + ATP = 3-O-(5'-adenylyl)-L-seryl-[protein] + diphosphate. The enzyme catalyses L-threonyl-[protein] + ATP = 3-O-(5'-adenylyl)-L-threonyl-[protein] + diphosphate. The catalysed reaction is L-tyrosyl-[protein] + ATP = O-(5'-adenylyl)-L-tyrosyl-[protein] + diphosphate. It catalyses the reaction L-histidyl-[protein] + UTP = N(tele)-(5'-uridylyl)-L-histidyl-[protein] + diphosphate. It carries out the reaction L-seryl-[protein] + UTP = O-(5'-uridylyl)-L-seryl-[protein] + diphosphate. The enzyme catalyses L-tyrosyl-[protein] + UTP = O-(5'-uridylyl)-L-tyrosyl-[protein] + diphosphate. Nucleotidyltransferase involved in the post-translational modification of proteins. It can catalyze the addition of adenosine monophosphate (AMP) or uridine monophosphate (UMP) to a protein, resulting in modifications known as AMPylation and UMPylation. This is Protein nucleotidyltransferase YdiU from Escherichia coli O9:H4 (strain HS).